The following is a 353-amino-acid chain: Purine nucleoside phosphorylase (353 aa).

A compositionally biased stretch (polar residues) spans 1-16 (MSKFSYLQNGKASTNG). Residues 1-42 (MSKFSYLQNGKASTNGVPHANGHHQQHQNGHSNGVARNGGTA) form a disordered region. Phosphate is bound by residues serine 98, histidine 129, 149 to 151 (RFH), and alanine 181. A purine D-ribonucleoside is bound at residue glutamate 266. Residue serine 285 participates in phosphate binding. Asparagine 308 contributes to the a purine D-ribonucleoside binding site.

It belongs to the PNP/MTAP phosphorylase family. As to quaternary structure, homotrimer.

It catalyses the reaction inosine + phosphate = alpha-D-ribose 1-phosphate + hypoxanthine. The enzyme catalyses guanosine + phosphate = alpha-D-ribose 1-phosphate + guanine. It carries out the reaction 2'-deoxyguanosine + phosphate = 2-deoxy-alpha-D-ribose 1-phosphate + guanine. The catalysed reaction is 2'-deoxyinosine + phosphate = 2-deoxy-alpha-D-ribose 1-phosphate + hypoxanthine. Its pathway is purine metabolism; purine nucleoside salvage. Inhibited by 5'-deaza-1'-aza-2c-deoxy-1'-(9-methylene) immucillin-H (DADMe-ImmH). Its function is as follows. As part of the purine salvage pathway, catalyzes the phosphorolytic breakdown of the N-glycosidic bond in the beta-(deoxy)ribonucleoside molecules, with the formation of the corresponding free purine bases and pentose-1-phosphate. Preferentially acts on 2'-deoxyinosine and inosine, and to a lesser extent on 2'-deoxyguanosine and guanosine. Has no activity towards adenosine or 2'-deoxyadenosine. The sequence is that of Purine nucleoside phosphorylase from Anopheles gambiae (African malaria mosquito).